Consider the following 90-residue polypeptide: Small ribosomal subunit protein bS16 (90 aa).

The protein belongs to the bacterial ribosomal protein bS16 family.

The polypeptide is Small ribosomal subunit protein bS16 (Shouchella clausii (strain KSM-K16) (Alkalihalobacillus clausii)).